The following is a 119-amino-acid chain: Small ribosomal subunit protein uS13 (119 aa).

Positions 92–119 (RRGLPVRGQRTKTNARTRKGPRKAIRAR) are disordered.

This sequence belongs to the universal ribosomal protein uS13 family. Part of the 30S ribosomal subunit. Forms a loose heterodimer with protein S19. Forms two bridges to the 50S subunit in the 70S ribosome.

In terms of biological role, located at the top of the head of the 30S subunit, it contacts several helices of the 16S rRNA. In the 70S ribosome it contacts the 23S rRNA (bridge B1a) and protein L5 of the 50S subunit (bridge B1b), connecting the 2 subunits; these bridges are implicated in subunit movement. Contacts the tRNAs in the A and P-sites. The sequence is that of Small ribosomal subunit protein uS13 from Nitrosomonas eutropha (strain DSM 101675 / C91 / Nm57).